Consider the following 621-residue polypeptide: MFDFEYQLKIIPEKPGVYLMKNSLGEVIYVGKAKVLKNRVRQYFQNSKNHGSKVRAMVKNIAEFEYIITDSEMEALILECNLIKKYRPRYNILLKDDKHYPFLKITTNEDFPRIFVTRVRAKDGARYLGPYPETSAVYETIELIKKIFPLRTCRLNIKENGEPVKPCLNYHIKLCTAPCAGYISREEYGKTIKKIIDLLNGKDNEVINDLKIKMEKASSELKFEEAASFRDKLLAVEKIRERQKIISSNFENEDFINMYSEEIDLCAQIFFVRDGKIMGREHFILDRSIFGNNADIISNFIKDFYGGTAFIPKTIYVPEVMDIELLENWLSSKKGSKVSIKIPQKGEKKKILDLVESNAKNTLEQFKLKLKVDKELYSNTLKELQNILELEEIPNRIEAYDISNIQGVDSVGSMIVFDKGKPKNSDYRRFKIKTVKGANDYDSMREILTRRFTHGLEEIKEIQKRNLLLSGAKFSVFPDLILMDGGKGQVNIALEVLEKLNINIPVCGMVKDDKHKTRGLVYNNKEINIKSNNKIMQFITRVQDEVHRFAITYHRSLRNRRVLHSVLEDIPNIGEKRRKELLQKFGSVENIKKASYDELLDTNSINQKAAKSIIDYFNNAK.

The 80-residue stretch at 13–92 folds into the GIY-YIG domain; that stretch reads EKPGVYLMKN…IKKYRPRYNI (80 aa). Residues 204-239 form the UVR domain; the sequence is NEVINDLKIKMEKASSELKFEEAASFRDKLLAVEKI.

This sequence belongs to the UvrC family. In terms of assembly, interacts with UvrB in an incision complex.

The protein localises to the cytoplasm. Its function is as follows. The UvrABC repair system catalyzes the recognition and processing of DNA lesions. UvrC both incises the 5' and 3' sides of the lesion. The N-terminal half is responsible for the 3' incision and the C-terminal half is responsible for the 5' incision. The chain is UvrABC system protein C from Clostridium novyi (strain NT).